The following is a 179-amino-acid chain: Peptide deformylase (179 aa).

Residues Cys102 and His144 each coordinate Fe cation. Glu145 is an active-site residue. His148 is a binding site for Fe cation.

This sequence belongs to the polypeptide deformylase family. Fe(2+) serves as cofactor.

The enzyme catalyses N-terminal N-formyl-L-methionyl-[peptide] + H2O = N-terminal L-methionyl-[peptide] + formate. In terms of biological role, removes the formyl group from the N-terminal Met of newly synthesized proteins. Requires at least a dipeptide for an efficient rate of reaction. N-terminal L-methionine is a prerequisite for activity but the enzyme has broad specificity at other positions. This Wolbachia pipientis wMel protein is Peptide deformylase.